We begin with the raw amino-acid sequence, 461 residues long: Porin AaxA (461 aa).

The first 22 residues, 1-22 (MSFRSILLTALLSLSFTNTMQA), serve as a signal peptide directing secretion.

Belongs to the OprB family.

The protein resides in the cell outer membrane. Its function is as follows. Facilitates L-arginine uptake, as part of the AaxABC system. The arginine uptake by the bacterium in the macrophage may be a virulence factor against the host innate immune response. This Chlamydia muridarum (strain MoPn / Nigg) protein is Porin AaxA (aaxA).